The sequence spans 113 residues: Protein crumbs homolog 3 (113 aa).

The first 24 residues, 1 to 24, serve as a signal peptide directing secretion; it reads MATPGLGVLLAFGLPMLPSGWSLT. The disordered stretch occupies residues 23–44; that stretch reads LTAPDPFTNSTTQPPGDESNGG. Topologically, residues 25–49 are extracellular; sequence APDPFTNSTTQPPGDESNGGLSSGA. N-linked (GlcNAc...) asparagine glycosylation occurs at asparagine 31. The chain crosses the membrane as a helical span at residues 50–70; it reads IVAITVVFSILGVLLIAVGLF. Residues 71–113 are Cytoplasmic-facing; the sequence is LLMRKLREKRQTEGTYRPSSEEQVGARAPPPPNLKLPPEERLI. Residues 77–113 form an interaction with EPB41L5 region; that stretch reads REKRQTEGTYRPSSEEQVGARAPPPPNLKLPPEERLI. The tract at residues 80–113 is disordered; it reads RQTEGTYRPSSEEQVGARAPPPPNLKLPPEERLI. A compositionally biased stretch (polar residues) spans 83–92; the sequence is EGTYRPSSEE. Residues 110–113 carry the PDZ-binding motif; it reads ERLI.

As to quaternary structure, component of a complex composed of CRB3, PALS1 and PATJ. Interacts (via C-terminus) with PALS1 (via PDZ domain). Interacts with PARD6A. Interacts (via intracellular domain) with EPB41L5. Interacts with WDR83. In terms of tissue distribution, expressed in the apical renal tubules (at protein level). Expressed in the retinal pigment epithelium.

The protein localises to the apical cell membrane. It localises to the cell junction. It is found in the tight junction. In terms of biological role, involved in the establishment of cell polarity in mammalian epithelial cells. Regulates the morphogenesis of tight junctions. Involved in promoting phosphorylation and cytoplasmic retention of transcriptional coactivators YAP1 and WWTR1/TAZ which leads to suppression of TGFB1-dependent transcription of target genes such as CCN2/CTGF, SERPINE1/PAI1, SNAI1/SNAIL1 and SMAD7. The sequence is that of Protein crumbs homolog 3 (Crb3) from Mus musculus (Mouse).